Here is a 212-residue protein sequence, read N- to C-terminus: ATP phosphoribosyltransferase (212 aa).

Belongs to the ATP phosphoribosyltransferase family. Short subfamily. Heteromultimer composed of HisG and HisZ subunits.

Its subcellular location is the cytoplasm. The catalysed reaction is 1-(5-phospho-beta-D-ribosyl)-ATP + diphosphate = 5-phospho-alpha-D-ribose 1-diphosphate + ATP. The protein operates within amino-acid biosynthesis; L-histidine biosynthesis; L-histidine from 5-phospho-alpha-D-ribose 1-diphosphate: step 1/9. Functionally, catalyzes the condensation of ATP and 5-phosphoribose 1-diphosphate to form N'-(5'-phosphoribosyl)-ATP (PR-ATP). Has a crucial role in the pathway because the rate of histidine biosynthesis seems to be controlled primarily by regulation of HisG enzymatic activity. The polypeptide is ATP phosphoribosyltransferase (Clostridium botulinum (strain Langeland / NCTC 10281 / Type F)).